The primary structure comprises 317 residues: Phospho-N-acetylmuramoyl-pentapeptide-transferase (317 aa).

9 helical membrane passes run 4 to 24, 49 to 69, 76 to 96, 112 to 132, 147 to 167, 186 to 206, 223 to 243, 246 to 266, and 297 to 317; these read LIYSVLIAFFIAMLEGPILIP, TPTMGGIIFILATFITMAVIV, AMIALYAFIGFGIIGAIDDTL, MILLLAISGIFAYYSANNPYI, LGVFYIPFIIVYFAATTNAVN, FLALVSFAMGHITLAVFCAIL, IFMGDTGSLALGGAIGAVAMI, LPLLVIIIGGIYVLEALSVIF, and RVVSVFCIVTVILCLVGFLSL.

It belongs to the glycosyltransferase 4 family. MraY subfamily. Requires Mg(2+) as cofactor.

Its subcellular location is the cell membrane. It carries out the reaction UDP-N-acetyl-alpha-D-muramoyl-L-alanyl-gamma-D-glutamyl-meso-2,6-diaminopimeloyl-D-alanyl-D-alanine + di-trans,octa-cis-undecaprenyl phosphate = di-trans,octa-cis-undecaprenyl diphospho-N-acetyl-alpha-D-muramoyl-L-alanyl-D-glutamyl-meso-2,6-diaminopimeloyl-D-alanyl-D-alanine + UMP. It functions in the pathway cell wall biogenesis; peptidoglycan biosynthesis. Catalyzes the initial step of the lipid cycle reactions in the biosynthesis of the cell wall peptidoglycan: transfers peptidoglycan precursor phospho-MurNAc-pentapeptide from UDP-MurNAc-pentapeptide onto the lipid carrier undecaprenyl phosphate, yielding undecaprenyl-pyrophosphoryl-MurNAc-pentapeptide, known as lipid I. This chain is Phospho-N-acetylmuramoyl-pentapeptide-transferase, found in Clostridium kluyveri (strain NBRC 12016).